Consider the following 240-residue polypeptide: tRNA1(Val) (adenine(37)-N6)-methyltransferase (240 aa).

Belongs to the methyltransferase superfamily. tRNA (adenine-N(6)-)-methyltransferase family.

It localises to the cytoplasm. It carries out the reaction adenosine(37) in tRNA1(Val) + S-adenosyl-L-methionine = N(6)-methyladenosine(37) in tRNA1(Val) + S-adenosyl-L-homocysteine + H(+). In terms of biological role, specifically methylates the adenine in position 37 of tRNA(1)(Val) (anticodon cmo5UAC). This is tRNA1(Val) (adenine(37)-N6)-methyltransferase from Photobacterium profundum (strain SS9).